A 380-amino-acid chain; its full sequence is Cytochrome b (380 aa).

Helical transmembrane passes span 34–54 (FGSL…FLAM), 78–99 (WLVR…YLHI), 114–134 (WNIG…GYVL), and 179–199 (FFAF…LHLL). Positions 84 and 98 each coordinate heme b. The heme b site is built by H183 and H197. H202 is an a ubiquinone binding site. Helical transmembrane passes span 227–247 (YKDT…SMLS), 289–309 (LGGV…PMIH), 321–341 (MTQF…WIGG), and 348–368 (FIEI…IFMP).

This sequence belongs to the cytochrome b family. As to quaternary structure, the cytochrome bc1 complex contains 3 respiratory subunits (MT-CYB, CYC1 and UQCRFS1), 2 core proteins (UQCRC1 and UQCRC2) and probably 6 low-molecular weight proteins. It depends on heme b as a cofactor.

It is found in the mitochondrion inner membrane. In terms of biological role, component of the ubiquinol-cytochrome c reductase complex (complex III or cytochrome b-c1 complex) that is part of the mitochondrial respiratory chain. The b-c1 complex mediates electron transfer from ubiquinol to cytochrome c. Contributes to the generation of a proton gradient across the mitochondrial membrane that is then used for ATP synthesis. The polypeptide is Cytochrome b (mt-cyb) (Ranodon sibiricus (Siberian salamander)).